The chain runs to 122 residues: Large ribosomal subunit protein uL14 (122 aa).

Belongs to the universal ribosomal protein uL14 family. Part of the 50S ribosomal subunit. Forms a cluster with proteins L3 and L19. In the 70S ribosome, L14 and L19 interact and together make contacts with the 16S rRNA in bridges B5 and B8.

Its function is as follows. Binds to 23S rRNA. Forms part of two intersubunit bridges in the 70S ribosome. The sequence is that of Large ribosomal subunit protein uL14 from Teredinibacter turnerae (strain ATCC 39867 / T7901).